The primary structure comprises 549 residues: Membrane protein insertase YidC (549 aa).

The chain crosses the membrane as a helical span at residues 8 to 28; sequence VLLATVLSVAVLIVWQFVFPS. The segment covering 29–39 has biased composition (pro residues); the sequence is PKPKPQPPKPP. The disordered stretch occupies residues 29–68; sequence PKPKPQPPKPPEAAQRAEAPAAPAPGQPAAQAPAPAVPQD. Low complexity-rich tracts occupy residues 40–49 and 55–68; these read EAAQRAEAPA and QPAA…VPQD. A run of 4 helical transmembrane segments spans residues 328 to 348, 354 to 374, 424 to 444, and 502 to 522; these read IDYG…LFVM, LVAN…VLLY, LGGC…YATL, and PGFF…YIFV.

The protein belongs to the OXA1/ALB3/YidC family. Type 1 subfamily. Interacts with the Sec translocase complex via SecD. Specifically interacts with transmembrane segments of nascent integral membrane proteins during membrane integration.

The protein localises to the cell inner membrane. Its function is as follows. Required for the insertion and/or proper folding and/or complex formation of integral membrane proteins into the membrane. Involved in integration of membrane proteins that insert both dependently and independently of the Sec translocase complex, as well as at least some lipoproteins. Aids folding of multispanning membrane proteins. The polypeptide is Membrane protein insertase YidC (Anaeromyxobacter sp. (strain Fw109-5)).